The primary structure comprises 165 residues: Ribosome maturation factor RimM (165 aa).

One can recognise a PRC barrel domain in the interval 94-165 (EDEFYIADLN…YVVLNYQREI (72 aa)).

The protein belongs to the RimM family. As to quaternary structure, binds ribosomal protein uS19.

The protein resides in the cytoplasm. An accessory protein needed during the final step in the assembly of 30S ribosomal subunit, possibly for assembly of the head region. Essential for efficient processing of 16S rRNA. May be needed both before and after RbfA during the maturation of 16S rRNA. It has affinity for free ribosomal 30S subunits but not for 70S ribosomes. The chain is Ribosome maturation factor RimM from Rickettsia felis (strain ATCC VR-1525 / URRWXCal2) (Rickettsia azadi).